A 286-amino-acid chain; its full sequence is Protein GrpE (286 aa).

Disordered regions lie at residues 1-51 (MSED…ETTA) and 260-286 (VAAP…QPTT). Low complexity-rich tracts occupy residues 39-50 (QPSSTPQTPETT) and 271-286 (TEST…QPTT).

It belongs to the GrpE family. In terms of assembly, homodimer.

The protein localises to the cytoplasm. Functionally, participates actively in the response to hyperosmotic and heat shock by preventing the aggregation of stress-denatured proteins, in association with DnaK and GrpE. It is the nucleotide exchange factor for DnaK and may function as a thermosensor. Unfolded proteins bind initially to DnaJ; upon interaction with the DnaJ-bound protein, DnaK hydrolyzes its bound ATP, resulting in the formation of a stable complex. GrpE releases ADP from DnaK; ATP binding to DnaK triggers the release of the substrate protein, thus completing the reaction cycle. Several rounds of ATP-dependent interactions between DnaJ, DnaK and GrpE are required for fully efficient folding. This is Protein GrpE from Gloeothece citriformis (strain PCC 7424) (Cyanothece sp. (strain PCC 7424)).